Consider the following 464-residue polypeptide: Cysteine--tRNA ligase (464 aa).

Zn(2+) is bound at residue Cys-29. The 'HIGH' region signature appears at 31–41 (ATVQGVPHIGH). Positions 160 to 180 (RLDEVQQGESTASGKRDPRDF) are disordered. Zn(2+)-binding residues include Cys-208, His-233, and Glu-237. The 'KMSKS' region signature appears at 264 to 268 (KMSKS). Lys-267 provides a ligand contact to ATP.

This sequence belongs to the class-I aminoacyl-tRNA synthetase family. Monomer. The cofactor is Zn(2+).

It is found in the cytoplasm. It catalyses the reaction tRNA(Cys) + L-cysteine + ATP = L-cysteinyl-tRNA(Cys) + AMP + diphosphate. In Saccharopolyspora erythraea (strain ATCC 11635 / DSM 40517 / JCM 4748 / NBRC 13426 / NCIMB 8594 / NRRL 2338), this protein is Cysteine--tRNA ligase.